The chain runs to 375 residues: MRFAPYLISAVVITTIILGGAWWTSAMDTKLQTKMKEIIDQHTSTWTPVVSSVTSTQTDTLRVTISEVVSVTATLTETFTATPTVTSVVHALATTDPHPDNSKIVILMGSNFQNDANSPLHPFAQSIIKNRREYAERHGYKFEFLDADAYASRVTGHLMPWVKVPMLQDTMKKYPDAEWIWWLDHDALVMNKDLNVVDHVLKHDRLNTILTREAEYKSGAGIPADGFRTPKDQDAKDVHFIISQDFNGINAGSLFIRNSEVGRWIVDLWFEPLYLDHIQGYAEQQAFSHMVFYHPQVYKHVGVVPLKAINAYDFDDNIWGYDDGDLCIHFAGCNYFKNCPEKFLKYAQILSSKQGSDWMSAQEKDHIQNLLKPSS.

At 1 to 2 (MR) the chain is on the cytoplasmic side. The chain crosses the membrane as a helical; Signal-anchor for type II membrane protein span at residues 3-23 (FAPYLISAVVITTIILGGAWW). Residues 24–375 (TSAMDTKLQT…HIQNLLKPSS (352 aa)) lie on the Lumenal side of the membrane.

This sequence belongs to the glycosyltransferase 34 family. In terms of processing, O-glycosylated.

It localises to the golgi apparatus membrane. In terms of biological role, involved in the O- and N-linked oligosaccharide modification of proteins transported through the Golgi stack. This occurs in cis Golgi where the enzyme transfers galactose from UDP-galactose to a variety of mannose based acceptors. This chain is Alpha-1,2-galactosyltransferase (gma12), found in Schizosaccharomyces pombe (strain 972 / ATCC 24843) (Fission yeast).